The sequence spans 36 residues: Potassium channel toxin alpha-KTx 11.3 (36 aa).

3 disulfides stabilise this stretch: C8–C27, C13–C33, and C17–C35.

The protein belongs to the short scorpion toxin superfamily. Potassium channel inhibitor family. Alpha-KTx 11 subfamily. As to expression, expressed by the venom gland.

It localises to the secreted. Its function is as follows. Binds and inhibits voltage-sensitive potassium channels. Inhibits the vertebrate potassium channel Kv1.1/KCNA1 with low affinity. This chain is Potassium channel toxin alpha-KTx 11.3, found in Parabuthus granulatus (Granulated thick-tailed scorpion).